The following is a 61-amino-acid chain: Delta-actitoxin-Avd2c (61 aa).

Positions 1–20 are cleaved as a signal peptide; sequence MMNRLLVFLMLGAFMLVVSA. Residues 21–31 constitute a propeptide that is removed on maturation; the sequence is NDAYGGDESLG. Intrachain disulfides connect Cys36–Cys51, Cys37–Cys45, and Cys39–Cys56.

Belongs to the sea anemone short toxin (type III) family.

The protein resides in the secreted. It is found in the nematocyst. Sodium channel inhibitor. 5 uM completely inhibits voltage-gated sodium channel (Nav) inactivation. This Anemonia viridis (Snakelocks anemone) protein is Delta-actitoxin-Avd2c.